The following is an 84-amino-acid chain: MAHKKGQGSTQNNRDSAGRRLGVKKFGGEKVIPGNIIIRQRGTKVHPGNGVGMGKDHTIFAMVEGVVKFENRSRSQKRVSVVPA.

The interval 1 to 25 (MAHKKGQGSTQNNRDSAGRRLGVKK) is disordered.

Belongs to the bacterial ribosomal protein bL27 family.

The protein is Large ribosomal subunit protein bL27 of Sulfurovum sp. (strain NBC37-1).